A 483-amino-acid polypeptide reads, in one-letter code: Glutamyl-tRNA(Gln) amidotransferase subunit A (483 aa).

Active-site charge relay system residues include lysine 76 and serine 151. The Acyl-ester intermediate role is filled by serine 175.

It belongs to the amidase family. GatA subfamily. Heterotrimer of A, B and C subunits.

It catalyses the reaction L-glutamyl-tRNA(Gln) + L-glutamine + ATP + H2O = L-glutaminyl-tRNA(Gln) + L-glutamate + ADP + phosphate + H(+). In terms of biological role, allows the formation of correctly charged Gln-tRNA(Gln) through the transamidation of misacylated Glu-tRNA(Gln) in organisms which lack glutaminyl-tRNA synthetase. The reaction takes place in the presence of glutamine and ATP through an activated gamma-phospho-Glu-tRNA(Gln). This is Glutamyl-tRNA(Gln) amidotransferase subunit A from Pseudomonas syringae pv. tomato (strain ATCC BAA-871 / DC3000).